The chain runs to 169 residues: Lutropin/choriogonadotropin subunit beta (169 aa).

The N-terminal stretch at 1 to 20 (MEMLQGLLLWMLLSVGGVWA) is a signal peptide. Disulfide bonds link Cys-29–Cys-77, Cys-43–Cys-92, Cys-46–Cys-130, Cys-54–Cys-108, Cys-58–Cys-110, and Cys-113–Cys-120. Asn-33 carries an N-linked (GlcNAc...) asparagine glycan. The disordered stretch occupies residues 131–169 (APQASSSSKDPPSQPLTSTSTPTPGASNRSSHPLPIKTS). A compositionally biased stretch (low complexity) spans 145–154 (PLTSTSTPTP). Over residues 155–169 (GASNRSSHPLPIKTS) the composition is skewed to polar residues. N-linked (GlcNAc...) asparagine glycosylation is present at Asn-158.

The protein belongs to the glycoprotein hormones subunit beta family. Heterodimer of a common alpha chain and a unique beta chain which confers biological specificity to thyrotropin, lutropin, follitropin and gonadotropin.

It is found in the secreted. Promotes spermatogenesis and ovulation by stimulating the testes and ovaries to synthesize steroids. This is Lutropin/choriogonadotropin subunit beta (LHB) from Equus quagga burchellii (Burchell's zebra).